An 890-amino-acid polypeptide reads, in one-letter code: Nucleoside hydrolase 3 (890 aa).

The signal sequence occupies residues 1–21 (MLTSPTLKSLWFLFTILGLLG). Residues Asn55, Asn232, Asn371, Asn485, Asn580, Asn655, and Asn740 are each glycosylated (N-linked (GlcNAc...) asparagine).

This sequence belongs to the IUNH family.

It localises to the secreted. It is found in the extracellular space. The protein localises to the apoplast. The enzyme catalyses a purine D-ribonucleoside + H2O = a purine nucleobase + D-ribose. The catalysed reaction is inosine + H2O = hypoxanthine + D-ribose. It catalyses the reaction adenosine + H2O = D-ribose + adenine. Its function is as follows. Extracellular purine-specific hydrolase present in the apoplastic fluid involved in the degradation of extracellular nucleosides, including inosine and adenosine, and which may participate in wound and pathogen responses (e.g. Botrytis cinerea). In Arabidopsis thaliana (Mouse-ear cress), this protein is Nucleoside hydrolase 3.